Consider the following 186-residue polypeptide: Periplasmic nitrate reductase, electron transfer subunit (186 aa).

An N-terminal signal peptide occupies residues 1–20 (MKTSKLNFLTLVASTGLALA). The heme c site is built by histidine 87, cysteine 102, cysteine 105, histidine 106, histidine 123, cysteine 144, cysteine 147, and histidine 148.

The protein belongs to the NapB family. Component of the periplasmic nitrate reductase NapAB complex composed of NapA and NapB. In terms of processing, binds 2 heme C groups per subunit.

Its subcellular location is the periplasm. In terms of biological role, electron transfer subunit of the periplasmic nitrate reductase complex NapAB. Transfers electrons to NapA subunit, thus allowing electron flow between membrane and periplasm. Essential for periplasmic nitrate reduction with nitrate as the terminal electron acceptor. This Wolinella succinogenes (strain ATCC 29543 / DSM 1740 / CCUG 13145 / JCM 31913 / LMG 7466 / NCTC 11488 / FDC 602W) (Vibrio succinogenes) protein is Periplasmic nitrate reductase, electron transfer subunit.